Reading from the N-terminus, the 603-residue chain is MRNIYLALNQHICGALEAAFPQASLVAKQSGQSLNPQLVPATKPEFGDFQVNGALALSKILKKAPRKIAEEIIKQLVKNDDFNKLCLKPEIAGPGFINLTIQNSCLTTEICARLNDDHLGVPIAKPLKTHKSLKPIVVDFSSPNIAKEMHVGHLRSTIIGDSIARVLEFRGHPVLRLNHVGDWGTQFGMLITYLKLVAPEALTTANAINLGDLVKFYRQAKKLFDEDETFQDASREEVVRLQNGDPQSLKAWQLLCDQSRIEFEKIYKRLDIHITERGESFYNQYLQDVIDDLKSTNLLVTDNGAKCIFLDDITGKDGKPLPLIVQKTDGGFNYATTDLAAIRYRLQAYPQGDGACRLIYVTDAGQASHFFAVFQVARRANWIPNDCRIEHVPFGLVQGEDGKKLKTRSGDTVRLKDLLDEAIIRAKNDLEERLNAEGRKEDQEFINKVSRVIGIAAVKYADLSQNRITNYQFSFNRMLALQGNTAPYLLYALVRIAGINRKGGSLNATINKLTFNEPQEWMLARELLKFDEVILQVEEELLPNRLCNYLFELSQVFNRFYDQVPVLKANDSLKASRLALCQLTADTIKLGLKLLGIPTLDRM.

A 'HIGH' region motif is present at residues 143 to 153 (PNIAKEMHVGH).

It belongs to the class-I aminoacyl-tRNA synthetase family. In terms of assembly, monomer.

It is found in the cytoplasm. The catalysed reaction is tRNA(Arg) + L-arginine + ATP = L-arginyl-tRNA(Arg) + AMP + diphosphate. In Prochlorococcus marinus (strain MIT 9211), this protein is Arginine--tRNA ligase.